A 414-amino-acid polypeptide reads, in one-letter code: Serine hydroxymethyltransferase (414 aa).

Residues Leu121 and 125-127 (GHL) each bind (6S)-5,6,7,8-tetrahydrofolate. The residue at position 229 (Lys229) is an N6-(pyridoxal phosphate)lysine.

The protein belongs to the SHMT family. As to quaternary structure, homodimer. Requires pyridoxal 5'-phosphate as cofactor.

The protein localises to the cytoplasm. It carries out the reaction (6R)-5,10-methylene-5,6,7,8-tetrahydrofolate + glycine + H2O = (6S)-5,6,7,8-tetrahydrofolate + L-serine. The protein operates within one-carbon metabolism; tetrahydrofolate interconversion. It participates in amino-acid biosynthesis; glycine biosynthesis; glycine from L-serine: step 1/1. Its function is as follows. Catalyzes the reversible interconversion of serine and glycine with tetrahydrofolate (THF) serving as the one-carbon carrier. This reaction serves as the major source of one-carbon groups required for the biosynthesis of purines, thymidylate, methionine, and other important biomolecules. Also exhibits THF-independent aldolase activity toward beta-hydroxyamino acids, producing glycine and aldehydes, via a retro-aldol mechanism. The sequence is that of Serine hydroxymethyltransferase from Thiobacillus denitrificans (strain ATCC 25259 / T1).